A 374-amino-acid chain; its full sequence is Chaperone protein DnaJ (374 aa).

Residues 5–70 enclose the J domain; that stretch reads DYYDVLGVAK…DKRAAYDRFG (66 aa). Residues 131-209 form a CR-type zinc finger; sequence GCEEKIRIPT…CHGQGRVQEY (79 aa). Residues Cys-144, Cys-147, Cys-161, Cys-164, Cys-183, Cys-186, Cys-197, and Cys-200 each coordinate Zn(2+). CXXCXGXG motif repeat units follow at residues 144–151, 161–168, 183–190, and 197–204; these read CKTCDGSG, CGTCGGAG, CPECHGAG, and CRDCHGQG.

This sequence belongs to the DnaJ family. As to quaternary structure, homodimer. Zn(2+) serves as cofactor.

It is found in the cytoplasm. Functionally, participates actively in the response to hyperosmotic and heat shock by preventing the aggregation of stress-denatured proteins and by disaggregating proteins, also in an autonomous, DnaK-independent fashion. Unfolded proteins bind initially to DnaJ; upon interaction with the DnaJ-bound protein, DnaK hydrolyzes its bound ATP, resulting in the formation of a stable complex. GrpE releases ADP from DnaK; ATP binding to DnaK triggers the release of the substrate protein, thus completing the reaction cycle. Several rounds of ATP-dependent interactions between DnaJ, DnaK and GrpE are required for fully efficient folding. Also involved, together with DnaK and GrpE, in the DNA replication of plasmids through activation of initiation proteins. The protein is Chaperone protein DnaJ of Marinomonas sp. (strain MWYL1).